The sequence spans 107 residues: Ferredoxin (107 aa).

2 consecutive 4Fe-4S ferredoxin-type domains span residues 8 to 37 (ERVV…LDEN) and 38 to 67 (GKSR…KASE). [4Fe-4S] cluster-binding residues include cysteine 17, cysteine 20, and cysteine 23. Positions 27, 47, and 53 each coordinate [3Fe-4S] cluster. Cysteine 57 provides a ligand contact to [4Fe-4S] cluster.

In terms of assembly, monomer. The cofactor is [4Fe-4S] cluster. [3Fe-4S] cluster is required as a cofactor. In terms of processing, the N-terminus is blocked.

Functionally, ferredoxins are iron-sulfur proteins that transfer electrons in a wide variety of metabolic reactions. In Pyrobaculum islandicum (strain DSM 4184 / JCM 9189 / GEO3), this protein is Ferredoxin.